A 636-amino-acid polypeptide reads, in one-letter code: Transcriptional repressor CTCFL (636 aa).

Disordered regions lie at residues 17 to 38, 160 to 195, and 222 to 257; these read KEQK…VQRV, ENPE…DKRE, and LEEQ…PQSF. The segment covering 160-170 has biased composition (acidic residues); it reads ENPELTPDLDE. A compositionally biased stretch (basic residues) spans 242 to 251; the sequence is AKPKRRRQTK. 11 consecutive C2H2-type zinc fingers follow at residues 257–279, 285–307, 313–336, 342–364, 370–392, 398–421, 428–451, 458–480, 486–508, 514–537, and 546–572; these read FQCD…IKIH, HLCH…VNTH, HKCR…RYKH, FKCS…IRSH, FQCC…MRTH, YECP…AQKH, YECP…RNLH, MKCR…QRTH, FKCK…MRMH, FSCL…RKYH, and HLCL…DPEH. Residues 562-624 form a disordered region; the sequence is QRHRKKCDPE…AAGSQSPDHG (63 aa). Basic and acidic residues predominate over residues 568–583; sequence CDPEHETLAPNKDRRP.

It belongs to the CTCF zinc-finger protein family. As to quaternary structure, interacts with histones, PRMT7 and SETD1A. Interacts (via N-terminus) with BAG6/BAT3. In terms of tissue distribution, testis-specific.

Its subcellular location is the cytoplasm. The protein localises to the nucleus. Functionally, testis-specific DNA binding protein responsible for insulator function, nuclear architecture and transcriptional control, which probably acts by recruiting epigenetic chromatin modifiers. Plays a key role in gene imprinting in male germline, by participating in the establishment of differential methylation at the IGF2/H19 imprinted control region (ICR). Directly binds the unmethylated H19 ICR and recruits the PRMT7 methyltransferase, leading to methylate histone H4 'Arg-3' to form H4R3sme2. This probably leads to recruit de novo DNA methyltransferases at these sites. Seems to act as tumor suppressor. In association with DNMT1 and DNMT3B, involved in activation of BAG1 gene expression by binding to its promoter. Required for dimethylation of H3 lysine 4 (H3K4me2) of MYC and BRCA1 promoters. In Mus musculus (Mouse), this protein is Transcriptional repressor CTCFL (Ctcfl).